The sequence spans 116 residues: NADH-ubiquinone oxidoreductase chain 3 (116 aa).

A run of 3 helical transmembrane segments spans residues 3–23 (LIMT…TVSF), 56–76 (FFLV…LLPL), and 87–107 (GTFF…IYEW).

The protein belongs to the complex I subunit 3 family.

The protein resides in the mitochondrion membrane. The catalysed reaction is a ubiquinone + NADH + 5 H(+)(in) = a ubiquinol + NAD(+) + 4 H(+)(out). In terms of biological role, core subunit of the mitochondrial membrane respiratory chain NADH dehydrogenase (Complex I) that is believed to belong to the minimal assembly required for catalysis. Complex I functions in the transfer of electrons from NADH to the respiratory chain. The immediate electron acceptor for the enzyme is believed to be ubiquinone. The polypeptide is NADH-ubiquinone oxidoreductase chain 3 (MT-ND3) (Cyprinus carpio (Common carp)).